A 140-amino-acid polypeptide reads, in one-letter code: Large ribosomal subunit protein uL16c (140 aa).

Belongs to the universal ribosomal protein uL16 family. In terms of assembly, part of the 50S ribosomal subunit.

It is found in the plastid. It localises to the chloroplast. The chain is Large ribosomal subunit protein uL16c from Cyanidium caldarium (Red alga).